The chain runs to 194 residues: Ribonuclease HII (194 aa).

In terms of domain architecture, RNase H type-2 spans Ile-3 to Leu-193. A divalent metal cation-binding residues include Asp-9, Glu-10, and Asp-101.

It belongs to the RNase HII family. Mn(2+) serves as cofactor. Mg(2+) is required as a cofactor.

The protein resides in the cytoplasm. It catalyses the reaction Endonucleolytic cleavage to 5'-phosphomonoester.. Endonuclease that specifically degrades the RNA of RNA-DNA hybrids. In Neisseria meningitidis serogroup C (strain 053442), this protein is Ribonuclease HII.